The primary structure comprises 237 residues: Sugar fermentation stimulation protein homolog (237 aa).

The protein belongs to the SfsA family.

This is Sugar fermentation stimulation protein homolog from Pseudomonas syringae pv. syringae (strain B728a).